Consider the following 223-residue polypeptide: Phosphoribosylformylglycinamidine synthase subunit PurQ (223 aa).

The 222-residue stretch at 2-223 (KFAVLKFPGS…MVNSWREQNV (222 aa)) folds into the Glutamine amidotransferase type-1 domain. Cysteine 85 serves as the catalytic Nucleophile. Active-site residues include histidine 193 and glutamate 195.

Part of the FGAM synthase complex composed of 1 PurL, 1 PurQ and 2 PurS subunits.

It localises to the cytoplasm. The enzyme catalyses N(2)-formyl-N(1)-(5-phospho-beta-D-ribosyl)glycinamide + L-glutamine + ATP + H2O = 2-formamido-N(1)-(5-O-phospho-beta-D-ribosyl)acetamidine + L-glutamate + ADP + phosphate + H(+). The catalysed reaction is L-glutamine + H2O = L-glutamate + NH4(+). It participates in purine metabolism; IMP biosynthesis via de novo pathway; 5-amino-1-(5-phospho-D-ribosyl)imidazole from N(2)-formyl-N(1)-(5-phospho-D-ribosyl)glycinamide: step 1/2. Part of the phosphoribosylformylglycinamidine synthase complex involved in the purines biosynthetic pathway. Catalyzes the ATP-dependent conversion of formylglycinamide ribonucleotide (FGAR) and glutamine to yield formylglycinamidine ribonucleotide (FGAM) and glutamate. The FGAM synthase complex is composed of three subunits. PurQ produces an ammonia molecule by converting glutamine to glutamate. PurL transfers the ammonia molecule to FGAR to form FGAM in an ATP-dependent manner. PurS interacts with PurQ and PurL and is thought to assist in the transfer of the ammonia molecule from PurQ to PurL. The sequence is that of Phosphoribosylformylglycinamidine synthase subunit PurQ from Staphylococcus saprophyticus subsp. saprophyticus (strain ATCC 15305 / DSM 20229 / NCIMB 8711 / NCTC 7292 / S-41).